Reading from the N-terminus, the 102-residue chain is Small ribosomal subunit protein uS10 (102 aa).

This sequence belongs to the universal ribosomal protein uS10 family. In terms of assembly, part of the 30S ribosomal subunit.

Its function is as follows. Involved in the binding of tRNA to the ribosomes. The sequence is that of Small ribosomal subunit protein uS10 from Arthrobacter sp. (strain FB24).